Here is a 299-residue protein sequence, read N- to C-terminus: Pyridoxal kinase PdxY (299 aa).

Substrate is bound at residue serine 18. Residues aspartate 120 and glutamate 157 each contribute to the ATP site. Aspartate 235 is a substrate binding site.

This sequence belongs to the pyridoxine kinase family. PdxY subfamily. Homodimer. Mg(2+) serves as cofactor.

The enzyme catalyses pyridoxal + ATP = pyridoxal 5'-phosphate + ADP + H(+). It participates in cofactor metabolism; pyridoxal 5'-phosphate salvage; pyridoxal 5'-phosphate from pyridoxal: step 1/1. Functionally, pyridoxal kinase involved in the salvage pathway of pyridoxal 5'-phosphate (PLP). Catalyzes the phosphorylation of pyridoxal to PLP. The polypeptide is Pyridoxal kinase PdxY (Deinococcus geothermalis (strain DSM 11300 / CIP 105573 / AG-3a)).